A 191-amino-acid chain; its full sequence is UMP-CMP kinase 2 (191 aa).

12 to 17 (GSGKGT) contacts ATP. The tract at residues 32–62 (SAGDLLRAERQREGSEFGALIESHIKNGSIV) is NMP. A ribonucleoside 5'-phosphate contacts are provided by residues Arg38, 60-62 (SIV), and 88-91 (GFPR). Asn95 lines the CMP pocket. An LID region spans residues 128-136 (NRGQGRTDD). Residue Arg129 coordinates ATP. Positions 133 and 144 each coordinate a ribonucleoside 5'-phosphate. Arg172 contacts ATP.

Belongs to the adenylate kinase family. UMP-CMP kinase subfamily. In terms of assembly, monomer. Mg(2+) serves as cofactor. In terms of tissue distribution, expressed in neurons and the pharynx.

The protein localises to the cytoplasm. It is found in the nucleus. The enzyme catalyses CMP + ATP = CDP + ADP. It carries out the reaction dCMP + ATP = dCDP + ADP. It catalyses the reaction UMP + ATP = UDP + ADP. Its function is as follows. Catalyzes the phosphorylation of pyrimidine nucleoside monophosphates at the expense of ATP. Plays an important role in de novo pyrimidine nucleotide biosynthesis. Has preference for UMP and CMP as phosphate acceptors. The protein is UMP-CMP kinase 2 of Caenorhabditis elegans.